The following is a 370-amino-acid chain: Cysteine synthase 1 (370 aa).

The N-terminal 16 residues, 1–16 (MFRQSVRRFATAALRS), are a transit peptide targeting the mitochondrion. Lysine 73 carries the N6-(pyridoxal phosphate)lysine modification. Residues asparagine 103, 209 to 213 (GTGGT), and serine 308 contribute to the pyridoxal 5'-phosphate site.

Belongs to the cysteine synthase/cystathionine beta-synthase family. Pyridoxal 5'-phosphate serves as cofactor.

The protein localises to the mitochondrion. It catalyses the reaction O-succinyl-L-serine + hydrogen sulfide = L-cysteine + succinate. The catalysed reaction is O-acetyl-L-serine + hydrogen sulfide = L-cysteine + acetate. The protein operates within amino-acid biosynthesis; L-cysteine biosynthesis; L-cysteine from L-serine: step 2/2. Functionally, catalyzes the conversion of O-succinyl-L-serine into cysteine, the last step in the cysteine biosynthesis pathway. Can also use O-acetyl-L-serine. This is Cysteine synthase 1 from Emericella nidulans (strain FGSC A4 / ATCC 38163 / CBS 112.46 / NRRL 194 / M139) (Aspergillus nidulans).